Here is a 346-residue protein sequence, read N- to C-terminus: GTPase Obg (346 aa).

Residues Met-1–Ile-158 form the Obg domain. The OBG-type G domain occupies Ala-159–Arg-327. GTP contacts are provided by residues Gly-165 to Ser-172, Phe-190 to Ala-194, Asp-212 to Gly-215, Asn-279 to Asp-282, and Ser-308 to Phe-310. Mg(2+) is bound by residues Ser-172 and Thr-192.

This sequence belongs to the TRAFAC class OBG-HflX-like GTPase superfamily. OBG GTPase family. Monomer. Requires Mg(2+) as cofactor.

It localises to the cytoplasm. An essential GTPase which binds GTP, GDP and possibly (p)ppGpp with moderate affinity, with high nucleotide exchange rates and a fairly low GTP hydrolysis rate. Plays a role in control of the cell cycle, stress response, ribosome biogenesis and in those bacteria that undergo differentiation, in morphogenesis control. The protein is GTPase Obg of Phenylobacterium zucineum (strain HLK1).